The primary structure comprises 84 residues: MQTHEILLKIKEIAKSKNFNLNLDEKTINQPLRELKIDSLDMFSIVVSLENEFGISFDDEKLMNLKNLADLVLEVKNLLAKKGV.

Positions 4–79 (HEILLKIKEI…DLVLEVKNLL (76 aa)) constitute a Carrier domain. S39 is subject to O-(pantetheine 4'-phosphoryl)serine.

4'-phosphopantetheine is transferred from CoA to a specific serine of the apo-ACP-like protein.

It functions in the pathway lipid metabolism; fatty acid biosynthesis. Carrier of the growing fatty acid chain in fatty acid biosynthesis. This is Acyl carrier protein homolog from Mycoplasma genitalium (strain ATCC 33530 / DSM 19775 / NCTC 10195 / G37) (Mycoplasmoides genitalium).